The sequence spans 213 residues: Ferric nitrobindin-like protein (213 aa).

The interval 17–42 (VNLAAEQSKSTSDKNLPEFGDMPIPD) is disordered. The GXWXGXG motif lies at 65–71 (GVWRGQG).

The protein belongs to the nitrobindin family.

The chain is Ferric nitrobindin-like protein from Corynebacterium jeikeium (strain K411).